Reading from the N-terminus, the 748-residue chain is Tyrosine--tRNA ligase 2, cytoplasmic (748 aa).

The residue at position 1 (methionine 1) is an N-acetylmethionine. The short motif at 441–449 (PSGRMHIAQ) is the 'HIGH' region element. L-tyrosine-binding residues include tyrosine 564, glutamine 568, aspartate 571, and glutamine 586. The 'KMSKS' region motif lies at 623–627 (KMSKS). Lysine 626 contributes to the ATP binding site.

The protein belongs to the class-I aminoacyl-tRNA synthetase family.

The protein resides in the cytoplasm. The protein localises to the cytosol. It catalyses the reaction tRNA(Tyr) + L-tyrosine + ATP = L-tyrosyl-tRNA(Tyr) + AMP + diphosphate + H(+). Functionally, catalyzes the attachment of tyrosine to tRNA(Tyr) in a two-step reaction: tyrosine is first activated by ATP to form Tyr-AMP and then transferred to the acceptor end of tRNA(Tyr). The polypeptide is Tyrosine--tRNA ligase 2, cytoplasmic (Arabidopsis thaliana (Mouse-ear cress)).